The sequence spans 506 residues: ATP synthase subunit alpha (506 aa).

The segment covering glycine 119–isoleucine 129 has biased composition (basic and acidic residues). Residues glycine 119–arginine 138 form a disordered region. Glycine 169–threonine 176 serves as a coordination point for ATP.

Belongs to the ATPase alpha/beta chains family. F-type ATPases have 2 components, CF(1) - the catalytic core - and CF(0) - the membrane proton channel. CF(1) has five subunits: alpha(3), beta(3), gamma(1), delta(1), epsilon(1). CF(0) has three main subunits: a(1), b(2) and c(9-12). The alpha and beta chains form an alternating ring which encloses part of the gamma chain. CF(1) is attached to CF(0) by a central stalk formed by the gamma and epsilon chains, while a peripheral stalk is formed by the delta and b chains.

It is found in the cell membrane. It carries out the reaction ATP + H2O + 4 H(+)(in) = ADP + phosphate + 5 H(+)(out). Its function is as follows. Produces ATP from ADP in the presence of a proton gradient across the membrane. The alpha chain is a regulatory subunit. In Caldanaerobacter subterraneus subsp. tengcongensis (strain DSM 15242 / JCM 11007 / NBRC 100824 / MB4) (Thermoanaerobacter tengcongensis), this protein is ATP synthase subunit alpha.